The sequence spans 215 residues: Cytochrome b6 (215 aa).

The chain crosses the membrane as a helical span at residues Ile-32 to Phe-52. Cys-35 lines the heme c pocket. Positions 86 and 100 each coordinate heme b. Helical transmembrane passes span Ala-90–Phe-110, Leu-116–Tyr-136, and Leu-186–Ile-206. Residues His-187 and His-202 each contribute to the heme b site.

It belongs to the cytochrome b family. PetB subfamily. As to quaternary structure, the 4 large subunits of the cytochrome b6-f complex are cytochrome b6, subunit IV (17 kDa polypeptide, PetD), cytochrome f and the Rieske protein, while the 4 small subunits are PetG, PetL, PetM and PetN. The complex functions as a dimer. It depends on heme b as a cofactor. Requires heme c as cofactor.

Its subcellular location is the plastid. The protein localises to the chloroplast thylakoid membrane. In terms of biological role, component of the cytochrome b6-f complex, which mediates electron transfer between photosystem II (PSII) and photosystem I (PSI), cyclic electron flow around PSI, and state transitions. This Chara vulgaris (Common stonewort) protein is Cytochrome b6.